The chain runs to 541 residues: MLSPQRVAAAASRGADDAMESSKPGPVQVVLVQKDQHSFELDEKALASILLQDHIRDLDVVVVSVAGAFRKGKSFILDFMLRYLYSQKESGHSNWLGDPEEPLTGFSWRGGSDPETTGIQIWSEVFTVEKPGGKKVAVVLMDTQGAFDSQSTVKDCATIFALSTMTSSVQIYNLSQNIQEDDLQQLQLFTEYGRLAMDEIFQKPFQTLMFLVRDWSFPYEYSYGLQGGMAFLDKRLQVKEHQHEEIQNVRNHIHSCFSDVTCFLLPHPGLQVATSPDFDGKLKDIAGEFKEQLQALIPYVLNPSKLMEKEINGSKVTCRGLLEYFKAYIKIYQGEDLPHPKSMLQATAEANNLAAAASAKDIYYNNMEEVCGGEKPYLSPDILEEKHCEFKQLALDHFKKTKKMGGKDFSFRYQQELEEEIKELYENFCKHNGSKNVFSTFRTPAVLFTGIVALYIASGLTGFIGLEVVAQLFNCMVGLLLIALLTWGYIRYSGQYRELGGAIDFGAAYVLEQASSHIGNSTQATVRDAVVGRPSMDKKAQ.

The segment at 1–25 (MLSPQRVAAAASRGADDAMESSKPG) is N-terminal hypervariable region (HVR). The Cytoplasmic segment spans residues 1–445 (MLSPQRVAAA…NVFSTFRTPA (445 aa)). The GB1/RHD3-type G domain occupies 57–305 (DLDVVVVSVA…LIPYVLNPSK (249 aa)). GDP contacts are provided by Arg-70, Lys-71, Gly-72, Lys-73, Ser-74, Phe-75, and Arg-109. Residue Asp-142 coordinates Mg(2+). Positions 213, 214, 272, and 275 each coordinate GDP. A 3HB (three-helix bundle) domain region spans residues 343 to 434 (MLQATAEANN…YENFCKHNGS (92 aa)). Lys-391 is subject to N6-acetyllysine. Residues 446–466 (VLFTGIVALYIASGLTGFIGL) form a helical membrane-spanning segment. Position 467 (Glu-467) is a topological domain, lumenal. Residues 468-488 (VVAQLFNCMVGLLLIALLTWG) form a helical membrane-spanning segment. The Cytoplasmic segment spans residues 489-541 (YIRYSGQYRELGGAIDFGAAYVLEQASSHIGNSTQATVRDAVVGRPSMDKKAQ). Position 535 is a phosphoserine (Ser-535).

It belongs to the TRAFAC class dynamin-like GTPase superfamily. GB1/RHD3 GTPase family. GB1 subfamily. Monomeric and homodimeric. The homodimer, transiently formed by two molecules on opposing membranes, is the active form mediating ER membrane fusion. Interacts with ZFYVE27; both proteins are involved in endoplasmic reticulum tubular network organization. Interacts with REEP5; both proteins are involved in endoplasmic reticulum tubular network organization. Expressed in the central nervous system and in dorsal root ganglia neurons. Expressed in peripheral tissues (at protein level).

It is found in the endoplasmic reticulum membrane. It catalyses the reaction GTP + H2O = GDP + phosphate + H(+). Functionally, atlastin-3 (ATL3) is a membrane-anchored GTPase that mediates the GTP-dependent fusion of endoplasmic reticulum (ER) membranes, maintaining the continuous ER network. It facilitates the formation of three-way junctions where ER tubules intersect. Two atlastin-3 on neighboring ER tubules bind GTP and form loose homodimers through the GB1/RHD3-type G domains and 3HB regions. Upon GTP hydrolysis, the 3HB regions tighten, pulling the membranes together to drive their fusion. After fusion, the homodimer disassembles upon release of inorganic phosphate (Pi). Subsequently, GDP dissociates, resetting the monomers to a conformation ready for a new fusion cycle. This Homo sapiens (Human) protein is Atlastin-3.